Here is a 349-residue protein sequence, read N- to C-terminus: Cobalt-precorrin-5B C(1)-methyltransferase (349 aa).

Belongs to the CbiD family.

The enzyme catalyses Co-precorrin-5B + S-adenosyl-L-methionine = Co-precorrin-6A + S-adenosyl-L-homocysteine. It functions in the pathway cofactor biosynthesis; adenosylcobalamin biosynthesis; cob(II)yrinate a,c-diamide from sirohydrochlorin (anaerobic route): step 6/10. Functionally, catalyzes the methylation of C-1 in cobalt-precorrin-5B to form cobalt-precorrin-6A. The chain is Cobalt-precorrin-5B C(1)-methyltransferase from Saccharolobus solfataricus (strain ATCC 35092 / DSM 1617 / JCM 11322 / P2) (Sulfolobus solfataricus).